Reading from the N-terminus, the 360-residue chain is Geranylgeranyl pyrophosphate synthase 12, chloroplastic (360 aa).

The transit peptide at 1–39 directs the protein to the chloroplast; it reads MANTVHLSSSSLFIQTRGRKYNSILSFNNLQKRTVLSLS. Positions 106, 109, and 138 each coordinate isopentenyl diphosphate. Mg(2+) contacts are provided by D145 and D151. R156 is a binding site for dimethylallyl diphosphate. R157 is an isopentenyl diphosphate binding site. Positions 245, 246, 283, 300, and 310 each coordinate dimethylallyl diphosphate.

The protein belongs to the FPP/GGPP synthase family. As to quaternary structure, monomer. Mg(2+) serves as cofactor.

Its subcellular location is the plastid. It is found in the chloroplast. The catalysed reaction is isopentenyl diphosphate + dimethylallyl diphosphate = (2E)-geranyl diphosphate + diphosphate. It carries out the reaction isopentenyl diphosphate + (2E)-geranyl diphosphate = (2E,6E)-farnesyl diphosphate + diphosphate. The enzyme catalyses isopentenyl diphosphate + (2E,6E)-farnesyl diphosphate = (2E,6E,10E)-geranylgeranyl diphosphate + diphosphate. It participates in isoprenoid biosynthesis; farnesyl diphosphate biosynthesis; farnesyl diphosphate from geranyl diphosphate and isopentenyl diphosphate: step 1/1. The protein operates within isoprenoid biosynthesis; geranyl diphosphate biosynthesis; geranyl diphosphate from dimethylallyl diphosphate and isopentenyl diphosphate: step 1/1. It functions in the pathway isoprenoid biosynthesis; geranylgeranyl diphosphate biosynthesis; geranylgeranyl diphosphate from farnesyl diphosphate and isopentenyl diphosphate: step 1/1. In terms of biological role, catalyzes the trans-addition of the three molecules of IPP onto DMAPP to form geranylgeranyl pyrophosphate. This chain is Geranylgeranyl pyrophosphate synthase 12, chloroplastic, found in Arabidopsis thaliana (Mouse-ear cress).